The sequence spans 500 residues: Putative (R)-citramalate synthase CimA (500 aa).

The 250-residue stretch at 9 to 258 (LRFFDTTLRD…DTRIRTERLY (250 aa)) folds into the Pyruvate carboxyltransferase domain.

This sequence belongs to the alpha-IPM synthase/homocitrate synthase family. Homodimer.

It catalyses the reaction pyruvate + acetyl-CoA + H2O = (3R)-citramalate + CoA + H(+). The protein operates within amino-acid biosynthesis; L-isoleucine biosynthesis; 2-oxobutanoate from pyruvate: step 1/3. Its function is as follows. Catalyzes the condensation of pyruvate and acetyl-coenzyme A to form (R)-citramalate. In Methanosphaerula palustris (strain ATCC BAA-1556 / DSM 19958 / E1-9c), this protein is Putative (R)-citramalate synthase CimA.